We begin with the raw amino-acid sequence, 369 residues long: uncharacterized protein (369 aa).

Belongs to the myo-inositol 1-phosphate synthase family.

This is an uncharacterized protein from Mycobacterium leprae (strain TN).